A 235-amino-acid chain; its full sequence is Voltage-gated hydrogen channel 1 (235 aa).

Residues 1 to 62 (MSRYLKHFTV…VMKKLFSSRR (62 aa)) are Cytoplasmic-facing. Residues 63–83 (FQIVIVFLVIVDALLVLGELL) traverse the membrane as a helical segment. At 84–100 (MDLKIIHPDKYHIAPKV) the chain is on the extracellular side. A helical membrane pass occupies residues 101-123 (FHYLSLSILTIFLVEVGFKIFVY). The Cytoplasmic portion of the chain corresponds to 124–131 (GREFFHHK). Residues 132-152 (FEVLDSIVVVVSFILDLVLLF) form a helical membrane-spanning segment. The Extracellular portion of the chain corresponds to 153–159 (REHEFEA). The helical transmembrane segment at 160–180 (VGLLILLRLWRVARIINGIIL) threads the bilayer. The Cytoplasmic segment spans residues 181 to 235 (SVKTRSEQQVSKLKQVNLKLATKVEQLQHSCVEKEQEIERLTRMLKQHGLLSEQT). Residues 187–228 (EQQVSKLKQVNLKLATKVEQLQHSCVEKEQEIERLTRMLKQH) adopt a coiled-coil conformation.

It belongs to the hydrogen channel family. As to quaternary structure, homodimer.

Its subcellular location is the membrane. The protein resides in the cell membrane. Mediates the voltage-dependent proton permeability of excitable membranes. Forms a proton-selective channel through which protons may pass in accordance with their electrochemical gradient. The chain is Voltage-gated hydrogen channel 1 (HVCN1) from Gallus gallus (Chicken).